Consider the following 592-residue polypeptide: Neurogenic locus notch homolog protein (592 aa).

The first 19 residues, 1–19 (MIFVLTLVALCTAIHCPDG), serve as a signal peptide directing secretion. EGF-like domains lie at 64–104 (YPSI…DYQV), 106–146 (VPEA…EKCT), 267–307 (YPEA…NTCI), 353–387 (NSQTNPPQLCHSAGSCDFDTGVCSCNPTNSGPTCE), 453–488 (VPNSCVTASLIICSNRGTCTDGVCKCNEGYSGALCE), and 546–588 (IDGE…KHCN). Disulfide bonds link Cys68–Cys82, Cys76–Cys92, Cys110–Cys123, Cys117–Cys134, Cys136–Cys145, Cys271–Cys284, Cys278–Cys293, Cys295–Cys306, Cys362–Cys375, Cys377–Cys386, Cys457–Cys471, Cys478–Cys487, Cys550–Cys565, Cys555–Cys576, and Cys578–Cys587. Asn552 carries N-linked (GlcNAc...) asparagine glycosylation.

Belongs to the NOTCH family. In terms of assembly, interacts with EB1.

The protein localises to the cell projection. The protein resides in the cilium. Its subcellular location is the flagellum. It is found in the cytoplasm. It localises to the cytoskeleton. The protein localises to the flagellum axoneme. The polypeptide is Neurogenic locus notch homolog protein (Giardia intestinalis (strain ATCC 50803 / WB clone C6) (Giardia lamblia)).